The sequence spans 473 residues: H(+)/Cl(-) exchange transporter ClcA (473 aa).

Over 1-32 (MKTDTSTFLAQQIVRLRRRDQIRRLMQRDKTP) the chain is Cytoplasmic. Residues 33–69 (LAILFMAAVVGTLTGLVGVAFEKAVSWVQNMRIGALV) traverse the membrane as a helical segment. The Periplasmic portion of the chain corresponds to 70 to 76 (QVADHAF). The chain crosses the membrane as a helical span at residues 77-100 (LLWPLAFILSALLAMVGYFLVRKF). The Selectivity filter part_1 motif lies at 106–110 (GSGIP). Chloride is bound at residue Ser-107. Positions 109 to 116 (IPEIEGAL) form an intramembrane region, helical. Residues 117-123 (EELRPVR) lie on the Cytoplasmic side of the membrane. Helical transmembrane passes span 124 to 141 (WWRV…TLGA) and 148 to 166 (EGPT…LDVF). The Selectivity filter part_2 motif lies at 146-150 (GREGP). The Cytoplasmic segment spans residues 167-176 (RMRSAEARHT). 2 consecutive intramembrane regions (helical) follow at residues 177–189 (LLAT…LSAA) and 193–201 (PLAGILFII). The Cytoplasmic portion of the chain corresponds to 202-214 (EEMRPQFRYNLIS). A helical membrane pass occupies residues 215-232 (IKAVFTGVIMSSIVFRIF). The Periplasmic segment spans residues 233–252 (NGEAPIIEVGKLSDAPVNTL). The chain crosses the membrane as a helical span at residues 253-281 (WLYLILGIIFGCVGPVFNSLVLRTQDMFQ). Residues 282 to 287 (RFHGGE) lie on the Cytoplasmic side of the membrane. The chain crosses the membrane as a helical span at residues 288 to 309 (IKKWVLMGGAIGGLCGILGLIE). Residues 310 to 329 (PEAAGGGFNLIPIAAAGNFS) are Periplasmic-facing. 2 consecutive transmembrane segments (helical) span residues 330 to 349 (VGLL…LCFS) and 355 to 376 (GIFA…MAAA). The Selectivity filter part_3 motif lies at 355–359 (GIFAP). Residues Ile-356 and Phe-357 each contribute to the chloride site. At 377-386 (VLFPQYHLEA) the chain is on the periplasmic side. Positions 387–401 (GTFAIAGMGALMAAS) form an intramembrane region, helical. The segment at residues 402 to 404 (VRA) is an intramembrane region (note=Loop between two helices). An intramembrane region (helical) is located at residues 405–416 (PLTGIVLVLEMT). Residues 417 to 421 (DNYQL) constitute an intramembrane region (note=Loop between two helices). A helical transmembrane segment spans residues 422-438 (ILPMIITCLGATLLAQF). The Cytoplasmic portion of the chain corresponds to 439 to 473 (LGGKPLYSTILARTLAKQDAEQAAKNQNASAGENT). Tyr-445 provides a ligand contact to chloride.

It belongs to the chloride channel (TC 2.A.49) family. ClcA subfamily. Homodimer.

Its subcellular location is the cell inner membrane. It catalyses the reaction 2 chloride(in) + H(+)(out) = 2 chloride(out) + H(+)(in). Proton-coupled chloride transporter. Functions as antiport system and exchanges two chloride ions for 1 proton. Probably acts as an electrical shunt for an outwardly-directed proton pump that is linked to amino acid decarboxylation, as part of the extreme acid resistance (XAR) response. The polypeptide is H(+)/Cl(-) exchange transporter ClcA (Salmonella choleraesuis (strain SC-B67)).